Consider the following 260-residue polypeptide: Cytosolic Fe-S cluster assembly factor Nubp2 homolog 2 (260 aa).

14-21 (GKGGVGKS) serves as a coordination point for ATP. [4Fe-4S] cluster is bound by residues cysteine 188 and cysteine 191.

It belongs to the Mrp/NBP35 ATP-binding proteins family. NUBP2/CFD1 subfamily. Heterotetramer of 2 Nubp1 and 2 Nubp2 chains. [4Fe-4S] cluster serves as cofactor.

Its subcellular location is the cytoplasm. Component of the cytosolic iron-sulfur (Fe/S) protein assembly (CIA) machinery. Required for maturation of extramitochondrial Fe-S proteins. The Nubp1-Nubp2 heterotetramer forms a Fe-S scaffold complex, mediating the de novo assembly of an Fe-S cluster and its transfer to target apoproteins. The chain is Cytosolic Fe-S cluster assembly factor Nubp2 homolog 2 from Drosophila yakuba (Fruit fly).